The following is a 478-amino-acid chain: Membrane-bound lytic murein transglycosylase F (478 aa).

The N-terminal stretch at 1–22 (MTRFLFAIILGFLLTACQQVTV) is a signal peptide. Residues 23–257 (EETEYVPHKL…HLNEKYFGHV (235 aa)) are non-LT domain. An LT domain region spans residues 258–478 (KRFDYIDTRA…PGTLSPDKPK (221 aa)). Glutamate 302 is an active-site residue. The tract at residues 446 to 478 (SKQQNSDEEEPSDLASEDGPAPVPGTLSPDKPK) is disordered. Residues 451–461 (SDEEEPSDLAS) are compositionally biased toward acidic residues.

The protein in the N-terminal section; belongs to the bacterial solute-binding protein 3 family. It in the C-terminal section; belongs to the transglycosylase Slt family.

Its subcellular location is the cell outer membrane. The enzyme catalyses Exolytic cleavage of the (1-&gt;4)-beta-glycosidic linkage between N-acetylmuramic acid (MurNAc) and N-acetylglucosamine (GlcNAc) residues in peptidoglycan, from either the reducing or the non-reducing ends of the peptidoglycan chains, with concomitant formation of a 1,6-anhydrobond in the MurNAc residue.. Murein-degrading enzyme that degrades murein glycan strands and insoluble, high-molecular weight murein sacculi, with the concomitant formation of a 1,6-anhydromuramoyl product. Lytic transglycosylases (LTs) play an integral role in the metabolism of the peptidoglycan (PG) sacculus. Their lytic action creates space within the PG sacculus to allow for its expansion as well as for the insertion of various structures such as secretion systems and flagella. This Shewanella sp. (strain ANA-3) protein is Membrane-bound lytic murein transglycosylase F.